Here is a 271-residue protein sequence, read N- to C-terminus: Vacuolar arginine/histidine antiporter stm1 (271 aa).

Positions 14–80 (LTELSSFLGA…GNVSSTVLVL (67 aa)) constitute a PQ-loop 1 domain. A run of 3 helical transmembrane segments spans residues 17–37 (LSSFLGALSLGCWVVLLIPQL), 49–69 (ISDLFLIIWLIGDFFNVLGSI), and 77–97 (VLVLSFYYIVSDSTLLMQIYY). Position 119 is a phosphoserine (serine 119). 4 helical membrane-spanning segments follow: residues 144–164 (FGVMGCVVIVSTIVGNLIISS), 178–198 (PFTAGCISSVLYFCARIPQII), 211–231 (IIFFVLASVGNTSYAFSILVF), and 245–265 (PWILGAFSTIFLDIYIFYQFI). A PQ-loop 2 domain is found at 185-239 (SSVLYFCARIPQIIKNHKAKSTEGLSIIFFVLASVGNTSYAFSILVFPASDYLNY).

It belongs to the laat-1 family.

The protein localises to the vacuole membrane. The catalysed reaction is L-histidine(out) + L-arginine(in) = L-histidine(in) + L-arginine(out). In terms of biological role, amino acid transporter that moves basic amino acids across the vacuolar membrane. Appears to function as an arginine/histidine antiporter. The chain is Vacuolar arginine/histidine antiporter stm1 (stm1) from Schizosaccharomyces pombe (strain 972 / ATCC 24843) (Fission yeast).